We begin with the raw amino-acid sequence, 322 residues long: Adenine deaminase (322 aa).

Zn(2+)-binding residues include His11, His13, and His189. Glu192 acts as the Proton donor in catalysis. Asp270 lines the Zn(2+) pocket. Asp271 contributes to the substrate binding site.

This sequence belongs to the metallo-dependent hydrolases superfamily. Adenosine and AMP deaminases family. Adenine deaminase type 2 subfamily. It depends on Zn(2+) as a cofactor.

It catalyses the reaction adenine + H2O + H(+) = hypoxanthine + NH4(+). Catalyzes the hydrolytic deamination of adenine to hypoxanthine. Plays an important role in the purine salvage pathway and in nitrogen catabolism. The sequence is that of Adenine deaminase from Rhizobium leguminosarum bv. trifolii (strain WSM2304).